The following is a 136-amino-acid chain: Photosystem II extrinsic protein U (136 aa).

The N-terminal stretch at 1–28 (MKQLAQRLFSLALVLALVLGISVQSAQA) is a signal peptide.

This sequence belongs to the PsbU family. As to quaternary structure, PSII is composed of 1 copy each of membrane proteins PsbA, PsbB, PsbC, PsbD, PsbE, PsbF, PsbH, PsbI, PsbJ, PsbK, PsbL, PsbM, PsbT, PsbX, PsbY, PsbZ, Psb30/Ycf12, peripheral proteins PsbO, CyanoQ (PsbQ), PsbU, PsbV and a large number of cofactors. It forms dimeric complexes.

Its subcellular location is the cellular thylakoid membrane. One of the extrinsic, lumenal subunits of photosystem II (PSII). PSII is a light-driven water plastoquinone oxidoreductase, using light energy to abstract electrons from H(2)O, generating a proton gradient subsequently used for ATP formation. The extrinsic proteins stabilize the structure of photosystem II oxygen-evolving complex (OEC), the ion environment of oxygen evolution and protect the OEC against heat-induced inactivation. This is Photosystem II extrinsic protein U from Synechococcus elongatus (strain ATCC 33912 / PCC 7942 / FACHB-805) (Anacystis nidulans R2).